Consider the following 265-residue polypeptide: Leucyl/phenylalanyl-tRNA--protein transferase (265 aa).

Positions 244-265 are disordered; the sequence is LDTGPDPASSSVTEISLRPAAP.

This sequence belongs to the L/F-transferase family.

Its subcellular location is the cytoplasm. The enzyme catalyses N-terminal L-lysyl-[protein] + L-leucyl-tRNA(Leu) = N-terminal L-leucyl-L-lysyl-[protein] + tRNA(Leu) + H(+). The catalysed reaction is N-terminal L-arginyl-[protein] + L-leucyl-tRNA(Leu) = N-terminal L-leucyl-L-arginyl-[protein] + tRNA(Leu) + H(+). It catalyses the reaction L-phenylalanyl-tRNA(Phe) + an N-terminal L-alpha-aminoacyl-[protein] = an N-terminal L-phenylalanyl-L-alpha-aminoacyl-[protein] + tRNA(Phe). Functionally, functions in the N-end rule pathway of protein degradation where it conjugates Leu, Phe and, less efficiently, Met from aminoacyl-tRNAs to the N-termini of proteins containing an N-terminal arginine or lysine. The protein is Leucyl/phenylalanyl-tRNA--protein transferase of Methylibium petroleiphilum (strain ATCC BAA-1232 / LMG 22953 / PM1).